The following is a 306-amino-acid chain: Mediator of RNA polymerase II transcription subunit 30 (306 aa).

Disordered regions lie at residues 1–22 (MSGQ…FNSP) and 51–148 (QQQM…STQA). The span at 51–128 (QQQMQSGGVQ…VSSAAQSATG (78 aa)) shows a compositional bias: low complexity.

It belongs to the Mediator complex subunit 30 family. Component of the Mediator complex.

The protein localises to the nucleus. Functionally, component of the Mediator complex, a coactivator involved in the regulated transcription of nearly all RNA polymerase II-dependent genes. Mediator functions as a bridge to convey information from gene-specific regulatory proteins to the basal RNA polymerase II transcription machinery. Mediator is recruited to promoters by direct interactions with regulatory proteins and serves as a scaffold for the assembly of a functional preinitiation complex with RNA polymerase II and the general transcription factors. The chain is Mediator of RNA polymerase II transcription subunit 30 (MED30) from Aedes aegypti (Yellowfever mosquito).